The primary structure comprises 876 residues: Alanine--tRNA ligase (876 aa).

His563, His567, Cys665, and His669 together coordinate Zn(2+).

It belongs to the class-II aminoacyl-tRNA synthetase family. Zn(2+) serves as cofactor.

Its subcellular location is the cytoplasm. The catalysed reaction is tRNA(Ala) + L-alanine + ATP = L-alanyl-tRNA(Ala) + AMP + diphosphate. In terms of biological role, catalyzes the attachment of alanine to tRNA(Ala) in a two-step reaction: alanine is first activated by ATP to form Ala-AMP and then transferred to the acceptor end of tRNA(Ala). Also edits incorrectly charged Ser-tRNA(Ala) and Gly-tRNA(Ala) via its editing domain. The chain is Alanine--tRNA ligase from Shouchella clausii (strain KSM-K16) (Alkalihalobacillus clausii).